A 61-amino-acid chain; its full sequence is UPF0434 protein Pfl01_4174 (61 aa).

It belongs to the UPF0434 family.

This is UPF0434 protein Pfl01_4174 from Pseudomonas fluorescens (strain Pf0-1).